Here is a 483-residue protein sequence, read N- to C-terminus: BTB/POZ domain and ankyrin repeat-containing protein COCH (483 aa).

The region spanning 25-105 (SDVVFSVEGR…LYSGQVSIVP (81 aa)) is the BTB domain. A C2HC NPR-type zinc finger spans residues 111–125 (RPNCGDRGCWHTHCT). The Zn(2+) site is built by C114, C119, H121, and C124. ANK repeat units lie at residues 249–278 (QKIR…LNLD), 279–308 (EALA…DVNF), 313–342 (TGKT…DPNV), and 346–380 (DGVT…KLRL). Disordered regions lie at residues 395–435 (EEGN…NSNM) and 450–483 (MSTS…SHDY). Positions 398 to 414 (NNNNNANNNNTGSSATN) are enriched in low complexity. The span at 456–465 (DSGDDDHNSN) shows a compositional bias: basic and acidic residues.

This sequence belongs to the plant 'ANKYRIN-BTB/POZ' family. 'NOOT-BOP-COCH-like' (NBCL) subfamily. Homodimer.

It localises to the nucleus. Its subcellular location is the cytoplasm. The protein resides in the cell membrane. Its pathway is protein modification; protein ubiquitination. In terms of biological role, may act as a substrate-specific adapter of an E3 ubiquitin-protein ligase complex (CUL3-RBX1-BTB) which mediates the ubiquitination and subsequent proteasomal degradation of target proteins. Transcriptional co-regulator involved in the promotion of leaf and floral meristem fate and determinacy. Promotes normal stipule growth and development. Required for the abscission of senescent organs, probably by regulating the cell wall disorganization in abscission zones (AZs, e.g. pulvini at the base of leaves). Down-regulates UNI expression in primordia of leaves and secondary inflorescences, and thereby controls their sizes and/or structures. Involved in the coordination of the symbiotic nodule developmental program. Promotes the formation of root nodules by interacting directly with APP1 to modulate the expression of the nuclear transcription factor Y subunit (NF-YA1), a key nodulin. Necessary for the robust maintenance of nodule identity throughout the nodule developmental program. The polypeptide is BTB/POZ domain and ankyrin repeat-containing protein COCH (Pisum sativum (Garden pea)).